A 359-amino-acid chain; its full sequence is CMP-N-acetylneuraminate-poly-alpha-2,8-sialyltransferase (359 aa).

Over 1–7 (MRSIRKR) the chain is Cytoplasmic. A helical; Signal-anchor for type II membrane protein membrane pass occupies residues 8–20 (WTICTISLLLIFY). Topologically, residues 21–359 (KTKEMARTEE…KLTTGKCIKQ (339 aa)) are lumenal. Residues Asn50, Asn74, and Asn119 are each glycosylated (N-linked (GlcNAc...) asparagine). Disulfide bonds link Cys142/Cys292 and Cys156/Cys356. The CMP-N-acetyl-beta-neuraminate site is built by Asn147 and Asn170. N-linked (GlcNAc...) asparagine glycosylation is found at Asn204 and Asn219. CMP-N-acetyl-beta-neuraminate is bound by residues Ser279, Thr280, Gly281, and Trp301. Residue His331 is the Proton donor/acceptor of the active site.

It belongs to the glycosyltransferase 29 family. In terms of processing, autopolysialylated.

It localises to the golgi apparatus membrane. The protein localises to the secreted. It catalyses the reaction [N-acetyl-alpha-D-neuraminosyl-(2-&gt;8)](n) + CMP-N-acetyl-beta-neuraminate = [N-acetyl-alpha-D-neuraminosyl-(2-&gt;8)](n+1) + CMP + H(+). Catalyzes the transfer of a sialic acid from a CMP-linked sialic acid donor onto a terminal alpha-2,3-, alpha-2,6-, or alpha-2,8-linked sialic acid of an N-linked glycan protein acceptor through alpha-2,8-linkages. Therefore, participates in polysialic acid synthesis on various sialylated N-acetyllactosaminyl oligosaccharides, including NCAM1 N-glycans, FETUB N-glycans and AHSG. It is noteworthy that alpha-2,3-linked sialic acid is apparently a better acceptor than alpha-2,6-linked sialic acid. This is CMP-N-acetylneuraminate-poly-alpha-2,8-sialyltransferase (ST8SIA4) from Bos taurus (Bovine).